The chain runs to 172 residues: MANGTNASAPYYSYEYYLDYLDLIPVDEKKLKAHKHSIVIAFWVSLAAFVVLLFLILLYMSWSASPQMRNSPKHHQTCPWSHGLNLHLCIQKCLPCHREPLATSQAQASSVEPGSRTGPDQPLRQESSSTLPLGGFQTHPTLLWELTLNGGPLVRSKPSEPPPGDRTSQLQS.

A helical transmembrane segment spans residues 38 to 58 (IVIAFWVSLAAFVVLLFLILL). Disordered regions lie at residues 105 to 136 (QAQASSVEPGSRTGPDQPLRQESSSTLPLGGF) and 151 to 172 (GPLVRSKPSEPPPGDRTSQLQS).

It belongs to the MRAP family. In terms of assembly, homodimer and heterodimer. Forms antiparallel homodimers and heterodimers with MRAP2. Interacts with MC1R, MC2R, MC3R, MC4R and MC5R. As to expression, expressed in adrenal cortex, testis, breast, thyroid, lymph node, ovary and fat. Expressed in adipose tissues.

The protein localises to the cell membrane. It is found in the endoplasmic reticulum membrane. Its function is as follows. Modulator of melanocortin receptors (MC1R, MC2R, MC3R, MC4R and MC5R). Acts by increasing ligand-sensitivity of melanocortin receptors and enhancing generation of cAMP by the receptors. Required both for MC2R trafficking to the cell surface of adrenal cells and for signaling in response to corticotropin (ACTH). May be involved in the intracellular trafficking pathways in adipocyte cells. The polypeptide is Melanocortin-2 receptor accessory protein (MRAP) (Homo sapiens (Human)).